A 339-amino-acid polypeptide reads, in one-letter code: uncharacterized protein (339 aa).

Position 28–35 (28–35 (GPINSGKT)) interacts with ATP.

This sequence belongs to the archaeal ATPase family.

This is an uncharacterized protein from Pyrococcus abyssi (strain GE5 / Orsay).